We begin with the raw amino-acid sequence, 106 residues long: Large ribosomal subunit protein uL24 (106 aa).

It belongs to the universal ribosomal protein uL24 family. Part of the 50S ribosomal subunit.

Functionally, one of two assembly initiator proteins, it binds directly to the 5'-end of the 23S rRNA, where it nucleates assembly of the 50S subunit. Its function is as follows. One of the proteins that surrounds the polypeptide exit tunnel on the outside of the subunit. The sequence is that of Large ribosomal subunit protein uL24 from Erythrobacter litoralis (strain HTCC2594).